We begin with the raw amino-acid sequence, 214 residues long: Adenylate kinase (214 aa).

10 to 15 (GAGKGT) contributes to the ATP binding site. Residues 30 to 59 (ATGDVLRAAVKEGTPLGLEAKAAMDRGDLV) form an NMP region. Residues Thr-31, Arg-36, 57–59 (DLV), and Gln-92 each bind AMP. Positions 126-161 (GRTTCEACQRPFFGRQPGETCTEGGVSGTLVRRKDD) are LID. Arg-127 contacts ATP. Arg-158 and Arg-169 together coordinate AMP. Residue Gly-198 participates in ATP binding.

Belongs to the adenylate kinase family. As to quaternary structure, monomer.

The protein localises to the cytoplasm. The catalysed reaction is AMP + ATP = 2 ADP. It participates in purine metabolism; AMP biosynthesis via salvage pathway; AMP from ADP: step 1/1. Its function is as follows. Catalyzes the reversible transfer of the terminal phosphate group between ATP and AMP. Plays an important role in cellular energy homeostasis and in adenine nucleotide metabolism. In Gemmatimonas aurantiaca (strain DSM 14586 / JCM 11422 / NBRC 100505 / T-27), this protein is Adenylate kinase.